A 206-amino-acid polypeptide reads, in one-letter code: dITP/XTP pyrophosphatase (206 aa).

Position 7–12 (7–12 (SNNAKK)) interacts with substrate. The Proton acceptor role is filled by Asp-72. Position 72 (Asp-72) interacts with Mg(2+). Residues Ser-73, 155-158 (FGYD), Lys-182, and 187-188 (HR) contribute to the substrate site.

The protein belongs to the HAM1 NTPase family. Homodimer. Mg(2+) serves as cofactor.

It catalyses the reaction XTP + H2O = XMP + diphosphate + H(+). The enzyme catalyses dITP + H2O = dIMP + diphosphate + H(+). The catalysed reaction is ITP + H2O = IMP + diphosphate + H(+). In terms of biological role, pyrophosphatase that catalyzes the hydrolysis of nucleoside triphosphates to their monophosphate derivatives, with a high preference for the non-canonical purine nucleotides XTP (xanthosine triphosphate), dITP (deoxyinosine triphosphate) and ITP. Seems to function as a house-cleaning enzyme that removes non-canonical purine nucleotides from the nucleotide pool, thus preventing their incorporation into DNA/RNA and avoiding chromosomal lesions. The polypeptide is dITP/XTP pyrophosphatase (Corynebacterium glutamicum (strain ATCC 13032 / DSM 20300 / JCM 1318 / BCRC 11384 / CCUG 27702 / LMG 3730 / NBRC 12168 / NCIMB 10025 / NRRL B-2784 / 534)).